Reading from the N-terminus, the 549-residue chain is Beta-hexosaminidase Amuc_0868 (549 aa).

Positions 1 to 28 (MISKCTFSATVFSLFSLCWGAPSSPVLE) are cleaved as a signal peptide. Position 161 (arginine 161) interacts with substrate. Catalysis depends on charge relay system residues aspartate 190 and histidine 260. Aspartate 326 contributes to the substrate binding site. The active-site Charge relay system is glutamate 327. Substrate is bound by residues tryptophan 393, 420–422 (YFD), and 474–476 (WTE). A disordered region spans residues 526–549 (GVNYKRPDNGAPAQPKAVITRERR).

Belongs to the glycosyl hydrolase 20 family.

The catalysed reaction is Hydrolysis of terminal non-reducing N-acetyl-D-hexosamine residues in N-acetyl-beta-D-hexosaminides.. Its activity is regulated as follows. Inhibited strongly by Cu(2+), Zn(2+), Cd(2+) and Ni(2+) ions. No effect on activity with Na(+), Li(+), K(+), Ca(2+), Mg(2+) or Mn(2+) ions. Potentially capable of cleaving the specific glycoside linkages in the process of mucin degradation in human intestinal tract. Hydrolyzes chromogenic substrates pNP-beta-GlcNAc with high activity and pNP-beta-GalNAc to a lesser extent, but not pNP-beta-glucose or pNP-beta-galactose. The chain is Beta-hexosaminidase Amuc_0868 from Akkermansia muciniphila (strain ATCC BAA-835 / DSM 22959 / JCM 33894 / BCRC 81048 / CCUG 64013 / CIP 107961 / Muc).